The primary structure comprises 873 residues: Sine oculis-binding protein homolog (873 aa).

Basic and acidic residues predominate over residues 1–14 (MAEMEKEGRPPENK). The segment at 1–26 (MAEMEKEGRPPENKRSRKPAHPVKRE) is disordered. 2 FCS-type zinc fingers span residues 142 to 180 (DDVSNVQIMCAWCQKVGIKRYSLSMGSEVKCFCSEKCFA) and 216 to 256 (FKNN…KCLN). Disordered stretches follow at residues 307–338 (ARRKAPSPASAAGQIQGPGPSASTTASPSDTA), 413–485 (RGPP…GAPL), 550–608 (KPPS…NQAQ), 742–766 (STEGSKNPEPPQDPKKPQPPEELAV), and 779–811 (SNCHLEGDTGKKAGEEPLAGGDKQDPNLNNPAD). The segment covering 312–338 (PSPASAAGQIQGPGPSASTTASPSDTA) has biased composition (low complexity). Over residues 460–485 (IHPPTTPTMPGNPPGLLPPPPPGAPL) the composition is skewed to pro residues. Residues 554–570 (GFSSNGENFIPSNSSET) are compositionally biased toward polar residues. The span at 571–603 (PGGKPPNSSSSPRESKQGSSKPSDSSPSCSGQS) shows a compositional bias: low complexity. Residues 783–793 (LEGDTGKKAGE) are compositionally biased toward basic and acidic residues.

This sequence belongs to the SOBP family.

In terms of biological role, implicated in development of the cochlea. The polypeptide is Sine oculis-binding protein homolog (Gallus gallus (Chicken)).